Here is a 631-residue protein sequence, read N- to C-terminus: Leucine aminopeptidase 2-2 (631 aa).

Substrate contacts are provided by residues 140–142 (QCQ) and 265–270 (PYGGME). H294 contacts Zn(2+). E295 (proton acceptor) is an active-site residue. Positions 298 and 317 each coordinate Zn(2+). Y395 (proton donor) is an active-site residue.

It belongs to the peptidase M1 family. Zn(2+) is required as a cofactor.

The protein localises to the cytoplasm. Its subcellular location is the nucleus. The enzyme catalyses an epoxide + H2O = an ethanediol. Functionally, aminopeptidase that preferentially cleaves di- and tripeptides. Also has low epoxide hydrolase activity (in vitro). Can hydrolyze the epoxide leukotriene LTA(4) but it forms preferentially 5,6-dihydroxy-7,9,11,14-eicosatetraenoic acid rather than the cytokine leukotriene B(4) as the product compared to the homologous mammalian enzyme (in vitro). This is Leucine aminopeptidase 2-2 from Meyerozyma guilliermondii (strain ATCC 6260 / CBS 566 / DSM 6381 / JCM 1539 / NBRC 10279 / NRRL Y-324) (Yeast).